Consider the following 62-residue polypeptide: MAVQKNRKTRSKRGMRRSHDALPAAALTEDSNTGEVHRRHHISPDGMYRGRQVISQGDSDDE.

The segment covering Met-1–Arg-16 has biased composition (basic residues). The disordered stretch occupies residues Met-1 to Glu-62. Residues Val-53–Glu-62 are compositionally biased toward polar residues.

It belongs to the bacterial ribosomal protein bL32 family.

This Alcanivorax borkumensis (strain ATCC 700651 / DSM 11573 / NCIMB 13689 / SK2) protein is Large ribosomal subunit protein bL32.